The sequence spans 492 residues: MALGFLVYLSYTPRIKGNIPAFTPETYPIIGSYKFFTHKLSFWKAAQRASKNGMFSFWLGKNHVVGVSGEAARKMYLENPAMDHIKGVILIGHGPDYIDGRKTKQHGIWLPVMAGNKSYAQKNVLNCQKTAELTKRLPKVTNDVRKAFESVASQGFIINPARMCAVLTWDTATRVFAADELIDVPENRAKLLYYLPILQKTSSCHLLSFPWASYFSLPYWKRKYGREGMRRLVTPIVEARMRIIDPVRADDPLQTFVDNGDSADYMINFLISMIFISAANGCVVSGAMLYSIAHHPELQEKIYQEIKAAANQYAADSSAPLVDQLDSLPVKAWENMSETIDLCYKECIRMWVAFPMGRMNEGTTDIKIPGTDEVVPAGGLCCYNTIDVHYSEKLYPEPLKWDPARFGEGRKEMEQEAHGFMGWGAGRHPCNGIRWAKIQQNMMLAYAFAMYKWTGCHKDGSPNTDFIPPTTALNELAPSLPQNLFLKAEPRK.

Asparagine 116 carries N-linked (GlcNAc...) asparagine glycosylation. A helical membrane pass occupies residues 269–293 (FLISMIFISAANGCVVSGAMLYSIA). Asparagine 335 carries N-linked (GlcNAc...) asparagine glycosylation. Cysteine 430 is a binding site for heme.

Belongs to the cytochrome P450 family. Requires heme as cofactor.

It is found in the membrane. It functions in the pathway secondary metabolite biosynthesis. Functionally, cytochrome P450 monooxygenase; part of the gene cluster that mediates the biosynthesis of an emodin derivative that may be involved in black Sigatoka disease of banana. The pathway begins with the synthesis of atrochrysone thioester by the polyketide synthase PKS8-1. The atrochrysone carboxyl ACP thioesterase MYCFIDRAFT_190111 then breaks the thioester bond and releases the atrochrysone carboxylic acid from PKS8-1. The decarboxylase MYCFIDRAFT_34057 then catalyzes the concerted decarboxylation-elimination required to convert atochrysone carboxylic acid into emodin anthrone, which is further oxidized to emodin by the anthrone oxygenase MYCFIDRAFT_34418. The functions of the other tailoring enzymes as well as the final product of the cluster have still to be identified. This Pseudocercospora fijiensis (strain CIRAD86) (Black leaf streak disease fungus) protein is Cytochrome P450 monooxygenase MYCFIDRAFT_204672.